A 238-amino-acid polypeptide reads, in one-letter code: Hydatid disease diagnostic antigen P-29 (238 aa).

Residues glycine 18–glutamate 238 form the BAR domain.

The sequence is that of Hydatid disease diagnostic antigen P-29 from Echinococcus granulosus (Hydatid tapeworm).